A 736-amino-acid polypeptide reads, in one-letter code: Melanotransferrin (736 aa).

Positions 1–19 (MRCRSAAMWIFLALRTALG) are cleaved as a signal peptide. Transferrin-like domains are found at residues 23–357 (VRWC…GLLC) and 366–706 (LRWC…GMQS). Intrachain disulfides connect C26-C63 and C36-C54. Fe(3+)-binding residues include D78 and Y107. N118 is a glycosylation site (N-linked (GlcNAc...) asparagine). Disulfide bonds link C130–C216, C172–C189, C186–C199, and C257–C271. T132 serves as a coordination point for hydrogencarbonate. N135 carries N-linked (GlcNAc...) asparagine glycosylation. Hydrogencarbonate contacts are provided by R136, V138, and G139. Y210 contacts Fe(3+). Residues H279 and Y451 each coordinate Fe(3+). Residue N515 is glycosylated (N-linked (GlcNAc...) asparagine). Position 625 (H625) interacts with Fe(3+). The GPI-anchor amidated glycine moiety is linked to residue G711. The propeptide at 712 to 736 (AAVGAPGASLLPLLPLAVGLLLSSL) is removed in mature form.

This sequence belongs to the transferrin family.

It localises to the cell membrane. In terms of biological role, involved in iron cellular uptake. Seems to be internalized and then recycled back to the cell membrane. Binds a single atom of iron per subunit. Could also bind zinc. In Oryctolagus cuniculus (Rabbit), this protein is Melanotransferrin.